The sequence spans 329 residues: UPF0725 protein EMB2204 (329 aa).

Belongs to the UPF0725 (EMB2204) family.

May be involved in embryogenesis. The protein is UPF0725 protein EMB2204 (EMB2204) of Arabidopsis thaliana (Mouse-ear cress).